The sequence spans 603 residues: Complement factor I (603 aa).

The first 18 residues, 1–18 (MKLAHLSLFLLALHLSSS), serve as a signal peptide directing secretion. 20 disulfide bridges follow: cysteine 36–cysteine 260, cysteine 46–cysteine 57, cysteine 51–cysteine 62, cysteine 64–cysteine 96, cysteine 70–cysteine 89, cysteine 78–cysteine 109, cysteine 144–cysteine 186, cysteine 157–cysteine 219, cysteine 191–cysteine 201, cysteine 234–cysteine 252, cysteine 246–cysteine 261, cysteine 264–cysteine 276, cysteine 271–cysteine 289, cysteine 283–cysteine 298, cysteine 348–cysteine 473, cysteine 386–cysteine 402, cysteine 394–cysteine 464, cysteine 487–cysteine 551, cysteine 515–cysteine 530, and cysteine 541–cysteine 570. The 54-residue stretch at 58 to 111 (IEGTCICKLPYQCPRAGTPVCAMNGRSYPTYCHQKSFECLHPEIKFSHNGTCAA) folds into the Kazal-like domain. N-linked (GlcNAc...) asparagine glycosylation is found at asparagine 106, asparagine 116, asparagine 174, and asparagine 182. In terms of domain architecture, SRCR spans 117–217 (VSLIYGRTKT…TELSNGLAGV (101 aa)). LDL-receptor class A domains lie at 218 to 262 (VCYK…LCCK) and 263 to 299 (GCRG…SRCE). Positions 244, 247, 249, 251, 257, and 258 each coordinate Ca(2+). N-linked (GlcNAc...) asparagine glycosylation occurs at asparagine 267. 6 residues coordinate Ca(2+): tyrosine 281, asparagine 284, glutamate 286, aspartate 288, aspartate 294, and glutamate 295. Positions 361-594 (VIGGKPANVG…YFDWISYHVG (234 aa)) constitute a Peptidase S1 domain. Active-site charge relay system residues include histidine 401 and aspartate 449. Residue asparagine 514 is glycosylated (N-linked (GlcNAc...) asparagine). Residue serine 545 is the Charge relay system of the active site. Residue asparagine 556 is glycosylated (N-linked (GlcNAc...) asparagine).

It belongs to the peptidase S1 family. Heterodimer of a light and heavy chains; disulfide-linked. The fully processed and mature protein circulates as a zymogen, and is allosterically activated by substrate-induced remodeling of the active site. Interacts with C3b. Interacts with complement factor H. As to expression, expressed in the liver by hepatocytes. Also present in other cells such as monocytes, fibroblasts or keratinocytes.

It localises to the secreted. Its subcellular location is the extracellular space. The catalysed reaction is Inactivates complement subcomponents C3b, iC3b and C4b by proteolytic cleavage.. In terms of biological role, trypsin-like serine protease that plays an essential role in regulating the immune response by controlling all complement pathways. Inhibits these pathways by cleaving three peptide bonds in the alpha-chain of C3b and two bonds in the alpha-chain of C4b thereby inactivating these proteins. Essential cofactors for these reactions include factor H and C4BP in the fluid phase and membrane cofactor protein/CD46 and CR1 on cell surfaces. The presence of these cofactors on healthy cells allows degradation of deposited C3b by CFI in order to prevent undesired complement activation, while in apoptotic cells or microbes, the absence of such cofactors leads to C3b-mediated complement activation and subsequent opsonization. In Mus musculus (Mouse), this protein is Complement factor I (Cfi).